Reading from the N-terminus, the 138-residue chain is uncharacterized protein (138 aa).

This is an uncharacterized protein from Acanthamoeba polyphaga mimivirus (APMV).